The sequence spans 38 residues: Humanin-like protein (38 aa).

In the testis, expressed in Leydig cells at 10, 20 and 60 days of age (at protein level). Also expressed in pachytene spermatocytes at day 20 and in vessels, peritubular cells and spermatids at day 60. Not detected in Sertoli cells (at protein level). In the adult ovary, expressed in stromal cells, granulosa cells, theca cells and oocytes at diestrus and proestrus (at protein level). Expressed in the anterior pituitary where it is detected in lactotropes and somatotropes with lower levels in females than males (at protein level). In the hippocampus, expressed in astrocytes but not in neurons or oligodendrocytes (at protein level). Expressed in muscle, liver and hypothalamus but not in epididymal fat (at protein level). Widely expressed with highest levels in cardiac and skeletal muscle and lowest levels in lung, testis and uterus. In the CNS, levels are relatively high in the cerebellum and cortex and low in the hippocampus. In the hippocampus, lower levels are detected in ovariectomized animals than in controls.

It localises to the mitochondrion. The protein localises to the secreted. The protein resides in the cytoplasm. In terms of biological role, plays a role as a neuroprotective factor. Protects against neuronal cell death induced by amyloid-beta peptides. Also protects against excitotoxic cell death. Prevents amyloid-beta peptide-induced spatial learning and memory impairments, protects against amyloid-beta peptide-induced suppression of hippocampal long-term potentiation, and inhibits amyloid-beta peptide-induced activation of STAT3 and inhibition of CASP3. Prevents glutamate-induced dendritic atrophy in hippocampal neurons and also prevents glutamate-induced decrease in SYP puncta number and total puncta area. Protects anterior pituitary cells from TNF-induced apoptosis. Plays a role in ovarian follicle development by acting as a cryoprotective factor for granulosa cells in the antral follicle. Increases androgen production in Leydig cells and promotes Leydig cell survival by preventing apoptosis. The polypeptide is Humanin-like protein (Rattus norvegicus (Rat)).